A 459-amino-acid chain; its full sequence is Cysteine--tRNA ligase (459 aa).

Cys-27 contacts Zn(2+). The short motif at Val-29–His-39 is the 'HIGH' region element. Residues Cys-208, His-233, and Glu-237 each coordinate Zn(2+). The 'KMSKS' region motif lies at Lys-265–Ser-269. ATP is bound at residue Lys-268.

The protein belongs to the class-I aminoacyl-tRNA synthetase family. In terms of assembly, monomer. Zn(2+) is required as a cofactor.

Its subcellular location is the cytoplasm. It catalyses the reaction tRNA(Cys) + L-cysteine + ATP = L-cysteinyl-tRNA(Cys) + AMP + diphosphate. This is Cysteine--tRNA ligase from Francisella tularensis subsp. mediasiatica (strain FSC147).